The chain runs to 223 residues: Ubiquitin-conjugating enzyme E2 S-A (223 aa).

The UBC core domain maps to 11–157; it reads HIIRLVYKEV…ARLLTEIHGG (147 aa). Cys-95 serves as the catalytic Glycyl thioester intermediate. The disordered stretch occupies residues 170–223; the sequence is QDLASGASASSADPMIPGVLGGAEGPMAKKHAGERDKKLAAKKKLDKKRALRRL. Residues 209–223 are compositionally biased toward basic residues; sequence AAKKKLDKKRALRRL.

Belongs to the ubiquitin-conjugating enzyme family.

The catalysed reaction is S-ubiquitinyl-[E1 ubiquitin-activating enzyme]-L-cysteine + [E2 ubiquitin-conjugating enzyme]-L-cysteine = [E1 ubiquitin-activating enzyme]-L-cysteine + S-ubiquitinyl-[E2 ubiquitin-conjugating enzyme]-L-cysteine.. It functions in the pathway protein modification; protein ubiquitination. In terms of biological role, catalyzes the covalent attachment of ubiquitin to other proteins. Acts as an essential factor of the anaphase promoting complex/cyclosome (APC/C), a cell cycle-regulated ubiquitin ligase that controls progression through mitosis. Acts by specifically elongating 'Lys-11'-linked polyubiquitin chains initiated by the E2 enzyme ube2c/ubch10 on APC/C substrates, enhancing the degradation of APC/C substrates by the proteasome and promoting mitotic exit. The protein is Ubiquitin-conjugating enzyme E2 S-A (ube2s-a) of Xenopus laevis (African clawed frog).